Reading from the N-terminus, the 251-residue chain is Triosephosphate isomerase (251 aa).

A substrate-binding site is contributed by 9–11 (NWK). His-95 (electrophile) is an active-site residue. The Proton acceptor role is filled by Glu-167. Substrate contacts are provided by residues Gly-173, Ser-213, and 234–235 (GG).

The protein belongs to the triosephosphate isomerase family. Homodimer.

It is found in the cytoplasm. It carries out the reaction D-glyceraldehyde 3-phosphate = dihydroxyacetone phosphate. The protein operates within carbohydrate biosynthesis; gluconeogenesis. Its pathway is carbohydrate degradation; glycolysis; D-glyceraldehyde 3-phosphate from glycerone phosphate: step 1/1. In terms of biological role, involved in the gluconeogenesis. Catalyzes stereospecifically the conversion of dihydroxyacetone phosphate (DHAP) to D-glyceraldehyde-3-phosphate (G3P). The sequence is that of Triosephosphate isomerase from Geobacter metallireducens (strain ATCC 53774 / DSM 7210 / GS-15).